The sequence spans 518 residues: WEB family protein At2g40480 (518 aa).

Coiled coils occupy residues 95–141 (DIKR…LQQE) and 188–219 (DNLV…AKLT). Residues 303-337 (NGESQDDDSEFCFPEPPRSPVTPRGLRIDNDFSTD) are disordered. The segment covering 328–337 (LRIDNDFSTD) has biased composition (basic and acidic residues). The stretch at 344–375 (ILKKLEEATEGVKQSKQALEAALNRVEIANVK) forms a coiled coil.

It belongs to the WEB family.

The protein is WEB family protein At2g40480 of Arabidopsis thaliana (Mouse-ear cress).